We begin with the raw amino-acid sequence, 353 residues long: 6-phosphogluconolactonase (353 aa).

The protein belongs to the cycloisomerase 2 family.

Its subcellular location is the cytoplasm. It carries out the reaction 6-phospho-D-glucono-1,5-lactone + H2O = 6-phospho-D-gluconate + H(+). It participates in carbohydrate degradation; pentose phosphate pathway; D-ribulose 5-phosphate from D-glucose 6-phosphate (oxidative stage): step 2/3. Functionally, carboxylic ester hydrolase that may be involved in ulvan degradation. Ulvan is the main polysaccharide component of the Ulvales (green seaweed) cell wall. It is composed of disaccharide building blocks comprising 3-sulfated rhamnose (Rha3S) linked to D-glucuronic acid (GlcA), L-iduronic acid (IduA), or D-xylose (Xyl). Catalyzes the hydrolysis of 6-phosphogluconolactone to 6-phosphogluconate. This chain is 6-phosphogluconolactonase (pgl), found in Formosa agariphila (strain DSM 15362 / KCTC 12365 / LMG 23005 / KMM 3901 / M-2Alg 35-1).